The sequence spans 197 residues: MEGAELIIQEIHREAEQKIQYILSEAQREAEKLKEEARKRAQSQAEWILRKAKTQAEIEKQRIIANAKLEVRRKKLAVQEELIGEVLSAMREKLAALPDDEYFEALVSLTKEAIEELGTKKIVLRSNERTLKLIDSRMEEFSEKVGVEVSLGEPIECIGGVLVESPDGTVRVDNTFDARIERLESELRATVAKALFG.

This sequence belongs to the V-ATPase E subunit family. As to quaternary structure, has multiple subunits with at least A(3), B(3), C, D, E, F, H, I and proteolipid K(x).

It localises to the cell membrane. In terms of biological role, component of the A-type ATP synthase that produces ATP from ADP in the presence of a proton gradient across the membrane. The polypeptide is A-type ATP synthase subunit E (Thermococcus gammatolerans (strain DSM 15229 / JCM 11827 / EJ3)).